Reading from the N-terminus, the 50-residue chain is Alpha-conotoxin CnIG (50 aa).

Positions 1 to 7 (LTTTVVS) are cleaved as a signal peptide. The segment covering 1 to 13 (LTTTVVSFPSDSA) has biased composition (polar residues). The segment at 1 to 26 (LTTTVVSFPSDSASDGRDNEAKDERS) is disordered. Positions 8-35 (FPSDSASDGRDNEAKDERSDMYELKRNG) are excised as a propeptide. The span at 14–26 (SDGRDNEAKDERS) shows a compositional bias: basic and acidic residues. Intrachain disulfides connect Cys-37–Cys-42 and Cys-38–Cys-48. Cys-48 carries the cysteine amide modification.

This sequence belongs to the conotoxin A superfamily. As to expression, expressed by the venom duct.

Its subcellular location is the secreted. In Conus consors (Singed cone), this protein is Alpha-conotoxin CnIG.